A 446-amino-acid chain; its full sequence is Exodeoxyribonuclease 7 large subunit (446 aa).

It belongs to the XseA family. As to quaternary structure, heterooligomer composed of large and small subunits.

Its subcellular location is the cytoplasm. The enzyme catalyses Exonucleolytic cleavage in either 5'- to 3'- or 3'- to 5'-direction to yield nucleoside 5'-phosphates.. In terms of biological role, bidirectionally degrades single-stranded DNA into large acid-insoluble oligonucleotides, which are then degraded further into small acid-soluble oligonucleotides. The chain is Exodeoxyribonuclease 7 large subunit from Geotalea uraniireducens (strain Rf4) (Geobacter uraniireducens).